A 335-amino-acid polypeptide reads, in one-letter code: Glycerol-3-phosphate dehydrogenase [NAD(P)+] (335 aa).

Residues tryptophan 15, arginine 36, and lysine 109 each contribute to the NADPH site. Sn-glycerol 3-phosphate is bound by residues lysine 109, glycine 137, and serine 139. An NADPH-binding site is contributed by alanine 141. Residues lysine 192, aspartate 245, serine 255, arginine 256, and asparagine 257 each coordinate sn-glycerol 3-phosphate. Residue lysine 192 is the Proton acceptor of the active site. Arginine 256 is a binding site for NADPH. Leucine 279 and glutamate 281 together coordinate NADPH.

The protein belongs to the NAD-dependent glycerol-3-phosphate dehydrogenase family.

The protein localises to the cytoplasm. The catalysed reaction is sn-glycerol 3-phosphate + NAD(+) = dihydroxyacetone phosphate + NADH + H(+). The enzyme catalyses sn-glycerol 3-phosphate + NADP(+) = dihydroxyacetone phosphate + NADPH + H(+). It participates in membrane lipid metabolism; glycerophospholipid metabolism. Functionally, catalyzes the reduction of the glycolytic intermediate dihydroxyacetone phosphate (DHAP) to sn-glycerol 3-phosphate (G3P), the key precursor for phospholipid synthesis. The protein is Glycerol-3-phosphate dehydrogenase [NAD(P)+] of Beijerinckia indica subsp. indica (strain ATCC 9039 / DSM 1715 / NCIMB 8712).